Here is a 244-residue protein sequence, read N- to C-terminus: RNA transcription, translation and transport factor protein (244 aa).

Lys20, Lys62, and Lys98 each carry N6-acetyllysine.

Belongs to the RTRAF family. As to quaternary structure, homodimer. Interacts with FAM98A (via N- and C-terminus). Interacts with NIN; which may prevent phosphorylation of NIN. Interacts with POLR2A. Component of a tRNA-splicing ligase complex with FAM98B, DDX1 and RTCB. (Microbial infection) Interacts with influenza A virus (IAV) RNA polymerase subunits PA, PB1 and PB2, and nucleocapsid NP. Associates with IAV polymerase complexes both in the nucleus and cytosol. Associates with IAV ribonucleoproteins (vRNP) packaged in virions. Interacts with hepatitis C virus core protein p19. Widely expressed. Expressed at high level in heart and skeletal muscle. Expressed at intermediate level in liver, pancreas, fetal brain and fetal lung. Weakly expressed in adult brain, adult lung, placenta, fetal liver and fetal kidney. Overexpressed in many brain tumors.

Its subcellular location is the nucleus. The protein localises to the cytoplasm. It localises to the cytosol. The protein resides in the perinuclear region. It is found in the cytoskeleton. Its subcellular location is the microtubule organizing center. The protein localises to the centrosome. In terms of biological role, RNA-binding protein involved in modulation of mRNA transcription by Polymerase II. Component of the tRNA-splicing ligase complex and is required for tRNA ligation. May be required for RNA transport. (Microbial infection) In case of infection by influenza virus A (IVA), is involved in viral replication. The protein is RNA transcription, translation and transport factor protein of Homo sapiens (Human).